We begin with the raw amino-acid sequence, 377 residues long: 26S proteasome non-ATPase regulatory subunit 4 (377 aa).

The VWFA domain occupies Ser-5–Ile-188. Lys-122 is covalently cross-linked (Glycyl lysine isopeptide (Lys-Gly) (interchain with G-Cter in SUMO2)). The interval Leu-197–Lys-262 is interaction with UBQLN1. Residues Ser-211–Arg-230 enclose the UIM 1 domain. The essential for ubiquitin-binding stretch occupies residues Leu-216–Leu-220. Positions Met-224–Arg-237 are enriched in basic and acidic residues. The segment at Met-224–Asp-255 is disordered. Residues Thr-250 and Thr-253 each carry the phosphothreonine modification. Ser-256 and Ser-266 each carry phosphoserine. In terms of domain architecture, UIM 2 spans Thr-282–Gly-301. The segment at Ile-287–Met-291 is essential for ubiquitin-binding. Disordered stretches follow at residues Phe-300–Asp-327 and Asn-341–Lys-377. 2 positions are modified to phosphoserine: Ser-358 and Ser-361. Residues Lys-365–Lys-377 show a composition bias toward basic and acidic residues.

Belongs to the proteasome subunit S5A family. As to quaternary structure, component of the 19S proteasome regulatory particle complex. The 26S proteasome consists of a 20S core particle (CP) and two 19S regulatory subunits (RP). The regulatory particle is made of a lid composed of 9 subunits, a base containing 6 ATPases and few additional components including PSMD4. Interacts with NUB1. Interacts with SQSTM1. Interacts with UBQLN4. Interacts with UBE3A. Interacts with UBQLN1 (via ubiquitin-like domain). Interacts with DDI2.

In terms of biological role, component of the 26S proteasome, a multiprotein complex involved in the ATP-dependent degradation of ubiquitinated proteins. This complex plays a key role in the maintenance of protein homeostasis by removing misfolded or damaged proteins, which could impair cellular functions, and by removing proteins whose functions are no longer required. Therefore, the proteasome participates in numerous cellular processes, including cell cycle progression, apoptosis, or DNA damage repair. PSMD4 acts as an ubiquitin receptor subunit through ubiquitin-interacting motifs and selects ubiquitin-conjugates for destruction. Displays a preferred selectivity for longer polyubiquitin chains. This Homo sapiens (Human) protein is 26S proteasome non-ATPase regulatory subunit 4 (PSMD4).